Reading from the N-terminus, the 867-residue chain is MEIGTRYDPKNIEMKWYKHWLEKKYFTPRGAGPKYSIVIPPPNITGKIHMGHALNITIQDILSRYKRMKGFDVLWLPGEDHAGIATQTAVERYLSTQGKSRRDFSRDEFLNIVWNWANKYRQEIKNQIMSIGASVDWTRERFTLDEGLSKAVRKVFVDMYKKGLIYKGKYIVNWCHRCGTVLSDEEVDYHEEEGALYHIKYPIKGEDDYIIIATTRPETMLGDTAVAVHPSDERYRKYVGKIAILPLVGREIPVIADNYVDPSFGTGALKVTPAHDTNDYLIGQRHNLPFVDIFDENIVINENGGKFKGMTAEQARKAVVEELEAQGYLVKIEKMKHSVGRCYRCDTVVEPRLMDQWFVSMKPLAKRAIEAVENGEVTFIPDRWKKVYLNWMYEIRDWCISRQLWWGHRIPVWQCQDCGHYNVSENEPVKCEKCGSTNLKQDEDVLDTWFSSALWPFSTMGWPEKTPDLERYYPTDVLVTGFDIIFFWVARMIMMGYEFMDEKPFKEVYIHQLVRDKYGRKMSKSLGNGIDPLEVIDEYGADPMRFTLAILAAQGRDLKLDVRFFDTYKKFANKIWNATRFVLMNLEDFEKVDIKLSKLKLSDKWILSRLQKTIQKISEALDSYDFNIAANEIYNFFWDELCDWYIEAVKNRLKTEERKVVQNVLVYVLDMSLRLLHPFMPFLTEELWTKLPTSGESIVVAQWPEIEENFIDENSEKRFMQLMNIIRGIRNIRAEVNVPQSTKVKTFVKGTLTDEEQEYIKFLGNVESIEFVEKRPELSATAYISLENEVYVSLGTLIDVKSEVERLRKKVEKLKSDMEKFAKKLEDENFLKNAPEDIVEETKEKQRLFQEQIARIEQIISDLEAKA.

Positions 42 to 52 (PNITGKIHMGH) match the 'HIGH' region motif. The 'KMSKS' region motif lies at 521 to 525 (KMSKS). ATP is bound at residue lysine 524. The stretch at 794–867 (LGTLIDVKSE…QIISDLEAKA (74 aa)) forms a coiled coil.

This sequence belongs to the class-I aminoacyl-tRNA synthetase family. ValS type 1 subfamily. In terms of assembly, monomer.

The protein localises to the cytoplasm. It carries out the reaction tRNA(Val) + L-valine + ATP = L-valyl-tRNA(Val) + AMP + diphosphate. In terms of biological role, catalyzes the attachment of valine to tRNA(Val). As ValRS can inadvertently accommodate and process structurally similar amino acids such as threonine, to avoid such errors, it has a 'posttransfer' editing activity that hydrolyzes mischarged Thr-tRNA(Val) in a tRNA-dependent manner. The protein is Valine--tRNA ligase of Fervidobacterium nodosum (strain ATCC 35602 / DSM 5306 / Rt17-B1).